Consider the following 288-residue polypeptide: Hyaluronidase (288 aa).

N-linked (GlcNAc...) asparagine glycosylation is present at Asn36. Glu66 acts as the Proton donor in catalysis. Cys142 and Cys154 are oxidised to a cystine. A glycan (N-linked (GlcNAc...) asparagine) is linked at Asn282.

It belongs to the glycosyl hydrolase 56 family. Expressed by the venom gland.

Its subcellular location is the secreted. It catalyses the reaction Random hydrolysis of (1-&gt;4)-linkages between N-acetyl-beta-D-glucosamine and D-glucuronate residues in hyaluronate.. Functionally, hydrolyzes high molecular weight hyaluronic acid to produce small oligosaccharides. In Polybia paulista (Neotropical social wasp), this protein is Hyaluronidase.